Here is a 265-residue protein sequence, read N- to C-terminus: S-adenosylmethionine decarboxylase proenzyme (265 aa).

The active-site Schiff-base intermediate with substrate; via pyruvic acid is serine 114. Serine 114 is subject to Pyruvic acid (Ser); by autocatalysis. Histidine 119 (proton acceptor; for processing activity) is an active-site residue. Cysteine 142 serves as the catalytic Proton donor; for catalytic activity.

Belongs to the prokaryotic AdoMetDC family. Type 2 subfamily. Heterooctamer of four alpha and four beta chains arranged as a tetramer of alpha/beta heterodimers. Pyruvate serves as cofactor. Is synthesized initially as an inactive proenzyme. Formation of the active enzyme involves a self-maturation process in which the active site pyruvoyl group is generated from an internal serine residue via an autocatalytic post-translational modification. Two non-identical subunits are generated from the proenzyme in this reaction, and the pyruvate is formed at the N-terminus of the alpha chain, which is derived from the carboxyl end of the proenzyme. The post-translation cleavage follows an unusual pathway, termed non-hydrolytic serinolysis, in which the side chain hydroxyl group of the serine supplies its oxygen atom to form the C-terminus of the beta chain, while the remainder of the serine residue undergoes an oxidative deamination to produce ammonia and the pyruvoyl group blocking the N-terminus of the alpha chain.

The enzyme catalyses S-adenosyl-L-methionine + H(+) = S-adenosyl 3-(methylsulfanyl)propylamine + CO2. It functions in the pathway amine and polyamine biosynthesis; S-adenosylmethioninamine biosynthesis; S-adenosylmethioninamine from S-adenosyl-L-methionine: step 1/1. In terms of biological role, catalyzes the decarboxylation of S-adenosylmethionine to S-adenosylmethioninamine (dcAdoMet), the propylamine donor required for the synthesis of the polyamines spermine and spermidine from the diamine putrescine. In Buchnera aphidicola subsp. Acyrthosiphon pisum (strain 5A), this protein is S-adenosylmethionine decarboxylase proenzyme.